A 680-amino-acid chain; its full sequence is Oligopeptidase A (680 aa).

Histidine 469 contributes to the Zn(2+) binding site. Glutamate 470 is an active-site residue. 2 residues coordinate Zn(2+): histidine 473 and histidine 476.

This sequence belongs to the peptidase M3 family. It depends on Zn(2+) as a cofactor.

The catalysed reaction is Hydrolysis of oligopeptides, with broad specificity. Gly or Ala commonly occur as P1 or P1' residues, but more distant residues are also important, as is shown by the fact that Z-Gly-Pro-Gly-|-Gly-Pro-Ala is cleaved, but not Z-(Gly)(5).. In terms of biological role, may play a specific role in the degradation of signal peptides after they are released from precursor forms of secreted proteins. Can cleave N-acetyl-L-Ala(4). This Escherichia coli (strain K12) protein is Oligopeptidase A (prlC).